A 285-amino-acid polypeptide reads, in one-letter code: Phosphatidylserine decarboxylase proenzyme (285 aa).

Active-site charge relay system; for autoendoproteolytic cleavage activity residues include aspartate 89, histidine 146, and serine 252. Serine 252 serves as the catalytic Schiff-base intermediate with substrate; via pyruvic acid; for decarboxylase activity. A Pyruvic acid (Ser); by autocatalysis modification is found at serine 252.

The protein belongs to the phosphatidylserine decarboxylase family. PSD-B subfamily. Prokaryotic type I sub-subfamily. In terms of assembly, heterodimer of a large membrane-associated beta subunit and a small pyruvoyl-containing alpha subunit. Pyruvate serves as cofactor. Post-translationally, is synthesized initially as an inactive proenzyme. Formation of the active enzyme involves a self-maturation process in which the active site pyruvoyl group is generated from an internal serine residue via an autocatalytic post-translational modification. Two non-identical subunits are generated from the proenzyme in this reaction, and the pyruvate is formed at the N-terminus of the alpha chain, which is derived from the carboxyl end of the proenzyme. The autoendoproteolytic cleavage occurs by a canonical serine protease mechanism, in which the side chain hydroxyl group of the serine supplies its oxygen atom to form the C-terminus of the beta chain, while the remainder of the serine residue undergoes an oxidative deamination to produce ammonia and the pyruvoyl prosthetic group on the alpha chain. During this reaction, the Ser that is part of the protease active site of the proenzyme becomes the pyruvoyl prosthetic group, which constitutes an essential element of the active site of the mature decarboxylase.

It is found in the cell membrane. The enzyme catalyses a 1,2-diacyl-sn-glycero-3-phospho-L-serine + H(+) = a 1,2-diacyl-sn-glycero-3-phosphoethanolamine + CO2. The protein operates within phospholipid metabolism; phosphatidylethanolamine biosynthesis; phosphatidylethanolamine from CDP-diacylglycerol: step 2/2. Functionally, catalyzes the formation of phosphatidylethanolamine (PtdEtn) from phosphatidylserine (PtdSer). The polypeptide is Phosphatidylserine decarboxylase proenzyme (Vibrio parahaemolyticus serotype O3:K6 (strain RIMD 2210633)).